The following is a 246-amino-acid chain: 4-hydroxy-tetrahydrodipicolinate reductase (246 aa).

Residues 8–13 (GAKGRM), 74–76 (GTT), and 101–104 (APNF) each bind NAD(+). The active-site Proton donor/acceptor is H131. Residue H132 coordinates (S)-2,3,4,5-tetrahydrodipicolinate. K135 acts as the Proton donor in catalysis. (S)-2,3,4,5-tetrahydrodipicolinate is bound at residue 141–142 (GT).

The protein belongs to the DapB family.

The protein resides in the cytoplasm. The catalysed reaction is (S)-2,3,4,5-tetrahydrodipicolinate + NAD(+) + H2O = (2S,4S)-4-hydroxy-2,3,4,5-tetrahydrodipicolinate + NADH + H(+). The enzyme catalyses (S)-2,3,4,5-tetrahydrodipicolinate + NADP(+) + H2O = (2S,4S)-4-hydroxy-2,3,4,5-tetrahydrodipicolinate + NADPH + H(+). Its pathway is amino-acid biosynthesis; L-lysine biosynthesis via DAP pathway; (S)-tetrahydrodipicolinate from L-aspartate: step 4/4. In terms of biological role, catalyzes the conversion of 4-hydroxy-tetrahydrodipicolinate (HTPA) to tetrahydrodipicolinate. In Cutibacterium acnes (strain DSM 16379 / KPA171202) (Propionibacterium acnes), this protein is 4-hydroxy-tetrahydrodipicolinate reductase.